A 106-amino-acid polypeptide reads, in one-letter code: COX assembly mitochondrial protein homolog (106 aa).

An N-acetylalanine modification is found at Ala-2. In terms of domain architecture, CHCH spans 28-71; that stretch reads RERCSEQVQDFTKCCKDSGVLMVVKCRKENSALKDCLTSYYKDP. Short sequence motifs (cx9C motif) lie at residues 31–41 and 53–63; these read CSEQVQDFTKC and CRKENSALKDC. 2 cysteine pairs are disulfide-bonded: Cys-31–Cys-63 and Cys-41–Cys-53.

The protein belongs to the CMC family. As to quaternary structure, component of the MITRAC (mitochondrial translation regulation assembly intermediate of cytochrome c oxidase complex) complex, the core components of this complex being COA3/MITRAC12 and COX14.

Its subcellular location is the mitochondrion. Functionally, component of the MITRAC (mitochondrial translation regulation assembly intermediate of cytochrome c oxidase complex) complex, that regulates cytochrome c oxidase assembly. This chain is COX assembly mitochondrial protein homolog (CMC1), found in Bos taurus (Bovine).